Reading from the N-terminus, the 596-residue chain is RNA-binding protein involved in heterochromatin assembly dri1 (596 aa).

Residue Ser176 is modified to Phosphoserine. An RRM domain is found at 236-314 (KIVHVAGLTN…RMLEIIPSST (79 aa)). The RanBP2-type 1 zinc finger occupies 335–364 (RPGDWNCPMCGFSNFQRRTSCFRCSFPGPT). Ser429 carries the phosphoserine modification. 2 RanBP2-type zinc fingers span residues 437-468 (RAGD…SRAT) and 552-580 (DQGD…PHYS).

Interacts with dpb4. Interacts with chp1.

Its subcellular location is the chromosome. The protein resides in the nucleus. The protein localises to the cytoplasm. It localises to the cytoplasmic granule. Functionally, mediates heterochromatin assembly by promoting RNAi-mediated heterochromatin silencing and histone deacetylation. Binds pericetromeric transcripts and recruits the RNA-induced transcriptional silencing (RITS) complex to heterochromatin. Recruits sir2 to chromatin to promote deacetylation of 'Lys-9' of histone H3. Involved in bipolar spindle assembly during mitosis. Required for proper localization of kinesin-14/Klp2 on the spindle microtubules. The protein is RNA-binding protein involved in heterochromatin assembly dri1 of Schizosaccharomyces pombe (strain 972 / ATCC 24843) (Fission yeast).